The following is a 592-amino-acid chain: V-type ATP synthase alpha chain (592 aa).

232-239 contributes to the ATP binding site; the sequence is GPFGAGKT.

Belongs to the ATPase alpha/beta chains family.

The catalysed reaction is ATP + H2O + 4 H(+)(in) = ADP + phosphate + 5 H(+)(out). Produces ATP from ADP in the presence of a proton gradient across the membrane. The V-type alpha chain is a catalytic subunit. The sequence is that of V-type ATP synthase alpha chain from Clostridium botulinum (strain Alaska E43 / Type E3).